We begin with the raw amino-acid sequence, 117 residues long: Large ribosomal subunit protein bL20 (117 aa).

The protein belongs to the bacterial ribosomal protein bL20 family.

In terms of biological role, binds directly to 23S ribosomal RNA and is necessary for the in vitro assembly process of the 50S ribosomal subunit. It is not involved in the protein synthesizing functions of that subunit. The protein is Large ribosomal subunit protein bL20 of Crocosphaera subtropica (strain ATCC 51142 / BH68) (Cyanothece sp. (strain ATCC 51142)).